A 124-amino-acid chain; its full sequence is Fluoride-specific ion channel FluC 2 (124 aa).

3 consecutive transmembrane segments (helical) span residues 36 to 56 (TFLI…YLAF), 66 to 86 (LFVM…SLDT), and 100 to 120 (LYAI…LALV). Na(+) is bound by residues G74 and T77.

This sequence belongs to the fluoride channel Fluc/FEX (TC 1.A.43) family.

Its subcellular location is the cell inner membrane. It catalyses the reaction fluoride(in) = fluoride(out). With respect to regulation, na(+) is not transported, but it plays an essential structural role and its presence is essential for fluoride channel function. Its function is as follows. Fluoride-specific ion channel. Important for reducing fluoride concentration in the cell, thus reducing its toxicity. The polypeptide is Fluoride-specific ion channel FluC 2 (Nitrobacter hamburgensis (strain DSM 10229 / NCIMB 13809 / X14)).